The primary structure comprises 417 residues: Cobalamin binding intrinsic factor (417 aa).

The signal sequence occupies residues 1–18 (MAWFALYLLSLLWATAGT). 3 disulfides stabilise this stretch: C26–C246, C103–C288, and C143–C182. D171 serves as a coordination point for cob(II)alamin. A Phosphoserine modification is found at S191. Positions 222 and 270 each coordinate cob(II)alamin. N-linked (GlcNAc...) asparagine glycans are attached at residues N311, N330, and N334. Cob(II)alamin is bound by residues 365–370 (SWGLVV) and 386–395 (WQFLSGVTPL). An N-linked (GlcNAc...) asparagine glycan is attached at N413.

The protein belongs to the eukaryotic cobalamin transport proteins family. In terms of assembly, interacts with CUBN (via CUB domains). Gastric mucosa.

Its subcellular location is the secreted. Promotes absorption of the essential vitamin cobalamin (Cbl) in the ileum. After interaction with CUBN, the CBLIF-cobalamin complex is internalized via receptor-mediated endocytosis. This chain is Cobalamin binding intrinsic factor, found in Homo sapiens (Human).